A 416-amino-acid polypeptide reads, in one-letter code: DNA-guanine transglycosylase (416 aa).

The active-site Proton acceptor is D95. The active-site Nucleophile is D256. The Zn(2+) site is built by C368, C370, C373, and H395.

Belongs to the DNA-guanine transglycosylase family. Zn(2+) is required as a cofactor.

Part of the dpd cluster involved in the insertion of 7-deazaguanine derivatives in DNA. DpdA may insert 7-cyano-7-deazaguanine (preQ0) into DNA with the help of DpdB. DpdA and dpdB are necessary and sufficient to synthesize 2'-deoxy-7-cyano-7-deazaguanosine (dPreQ0). This Salmonella montevideo protein is DNA-guanine transglycosylase.